A 444-amino-acid chain; its full sequence is Tubulin beta chain (444 aa).

GTP is bound by residues Gln11, Glu69, Ser138, Gly142, Thr143, Gly144, Asn204, and Asn226. Mg(2+) is bound at residue Glu69.

Belongs to the tubulin family. As to quaternary structure, dimer of alpha and beta chains. A typical microtubule is a hollow water-filled tube with an outer diameter of 25 nm and an inner diameter of 15 nM. Alpha-beta heterodimers associate head-to-tail to form protofilaments running lengthwise along the microtubule wall with the beta-tubulin subunit facing the microtubule plus end conferring a structural polarity. Microtubules usually have 13 protofilaments but different protofilament numbers can be found in some organisms and specialized cells. The cofactor is Mg(2+).

It localises to the cytoplasm. It is found in the cytoskeleton. Its function is as follows. Tubulin is the major constituent of microtubules, a cylinder consisting of laterally associated linear protofilaments composed of alpha- and beta-tubulin heterodimers. Microtubules grow by the addition of GTP-tubulin dimers to the microtubule end, where a stabilizing cap forms. Below the cap, tubulin dimers are in GDP-bound state, owing to GTPase activity of alpha-tubulin. In Phytophthora cinnamomi (Cinnamon fungus), this protein is Tubulin beta chain.